The chain runs to 327 residues: MLSHDWTDNRKNLMLFSGRAHPELAEQVAKELDMHVTTQDAREFANGEIFVRFHESVRGCDAFVLQSCPAPVNTWLMEQLIMIDALKRGSAKRITAVIPFYPYARQDKKHRGREPISARLVADLLKTAGADRIVTVDLHTDQIQGFFDGPVDHMRGQNLLTGYIKNNYPDTNMVVVSPDSGRVRIAEKWGDALGGVPLAFIHKTRDLRVPNQVVSNRVVGEVEGRTCVLIDDMIDTGGTVAGAVQLLRNDGASDVIIAATHGVLSPPAAERLAQYGTREVIVTNTLPIGEEKRFPQLTVLSIAPLLASTIRAIFENGSVTGLFDGEA.

ATP contacts are provided by residues 46-48 (NGE) and 105-106 (RQ). Residues His-139 and Asp-179 each coordinate Mg(2+). Lys-203 is a catalytic residue. D-ribose 5-phosphate-binding positions include Arg-205, Asp-231, and 235–239 (DTGGT).

It belongs to the ribose-phosphate pyrophosphokinase family. Class I subfamily. Homohexamer. Requires Mg(2+) as cofactor.

It is found in the cytoplasm. It carries out the reaction D-ribose 5-phosphate + ATP = 5-phospho-alpha-D-ribose 1-diphosphate + AMP + H(+). Its pathway is metabolic intermediate biosynthesis; 5-phospho-alpha-D-ribose 1-diphosphate biosynthesis; 5-phospho-alpha-D-ribose 1-diphosphate from D-ribose 5-phosphate (route I): step 1/1. In terms of biological role, involved in the biosynthesis of the central metabolite phospho-alpha-D-ribosyl-1-pyrophosphate (PRPP) via the transfer of pyrophosphoryl group from ATP to 1-hydroxyl of ribose-5-phosphate (Rib-5-P). This chain is Ribose-phosphate pyrophosphokinase, found in Mycobacterium leprae (strain TN).